Here is a 161-residue protein sequence, read N- to C-terminus: MGNFTVRATAGLMLASLSTLAHAAKLEDTAPYPKAEAGFTRQVIHLPQQAQEENFKVEILAGKTLEVDCNRQRLGGTLEEKNLEGWGYPFYRLEKVSGPMSTLMACPPGTQKKRVFVPVIGDGFTVRYNSKLPIVVYAPQDVEVRFRIWSASDKIGVAIPE.

Residues 1–23 (MGNFTVRATAGLMLASLSTLAHA) form the signal peptide. Cys-69 and Cys-106 are joined by a disulfide.

The protein belongs to the protease inhibitor I11 (ecotin) family. In terms of assembly, homodimer.

It is found in the periplasm. In terms of biological role, general inhibitor of family S1 serine proteases. The polypeptide is Ecotin (Pseudomonas fluorescens (strain Pf0-1)).